The chain runs to 395 residues: Inner membrane protein YjgN (395 aa).

Topologically, residues 1–24 (MNNVISSKDNHNHTLVFTGKGGKY) are cytoplasmic. Residues 25–45 (FVICLVNFLLTCITLGIYAPW) traverse the membrane as a helical segment. The Periplasmic portion of the chain corresponds to 46 to 71 (AMVKCRRYIYTNMTLNNQPFAYKATG). A helical membrane pass occupies residues 72–92 (GALFISVLLVFIIYIVSLSLI). Residues 93–95 (EHG) are Cytoplasmic-facing. Residues 96-116 (HPGLGFTLFGLLIAIIPFMAV) traverse the membrane as a helical segment. The Periplasmic portion of the chain corresponds to 117–146 (KGLQYQAMMTSLNGVHFGFQCSMRRAWWYM). The helical transmembrane segment at 147–167 (FALPVLLMVALYIVLYIISLV) threads the bilayer. Position 168 (T168) is a topological domain, cytoplasmic. A helical membrane pass occupies residues 169–189 (IAVGGLVFSIVFLGLLAIIGI). The Periplasmic portion of the chain corresponds to 190–229 (GVINGITYSKWMTLFGNGANFGIHRFSIQVNVKTCIRGCV). Residues 230–250 (LAMLTLFPFAVVIGYLIAPVF) traverse the membrane as a helical segment. Residues 251 to 275 (TDMILLSMMGNAQAGGALILQYYGQ) lie on the Cytoplasmic side of the membrane. The helical transmembrane segment at 276–296 (IMACYFLYFLAIIVVTSYLYV) threads the bilayer. Residues 297-327 (ALRNLFLNNLSLANDSIRFHSSVTAHGMLWR) are Periplasmic-facing. Residues 328–348 (LLVVFVISGVTLGLAYPWLKI) traverse the membrane as a helical segment. At 349 to 395 (WLVSWLAQNTQVQGDLDSLELTNDEKPLENSPLMWISRGIMPYFPFI) the chain is on the cytoplasmic side.

Its subcellular location is the cell inner membrane. This chain is Inner membrane protein YjgN (yjgN), found in Salmonella typhimurium (strain LT2 / SGSC1412 / ATCC 700720).